The primary structure comprises 492 residues: Probable cobyric acid synthase (492 aa).

A GATase cobBQ-type domain is found at 252–444 (PIEVNIVKFS…FHGILENFEF (193 aa)). Residue cysteine 330 is the Nucleophile of the active site. Residue histidine 436 is part of the active site.

This sequence belongs to the CobB/CobQ family. CobQ subfamily.

The protein operates within cofactor biosynthesis; adenosylcobalamin biosynthesis. Functionally, catalyzes amidations at positions B, D, E, and G on adenosylcobyrinic A,C-diamide. NH(2) groups are provided by glutamine, and one molecule of ATP is hydrogenolyzed for each amidation. The chain is Probable cobyric acid synthase from Methanococcus maripaludis (strain C7 / ATCC BAA-1331).